A 109-amino-acid polypeptide reads, in one-letter code: Flagellar hook-basal body complex protein FliE (109 aa).

It belongs to the FliE family.

The protein localises to the bacterial flagellum basal body. This chain is Flagellar hook-basal body complex protein FliE, found in Pseudomonas savastanoi pv. phaseolicola (strain 1448A / Race 6) (Pseudomonas syringae pv. phaseolicola (strain 1448A / Race 6)).